We begin with the raw amino-acid sequence, 837 residues long: Semaphorin-4G (837 aa).

The signal sequence occupies residues 1–17; that stretch reads MWGRLWPLLFSFLTVTA. At 18-673 the chain is on the extracellular side; the sequence is VPGPSLRRPS…GAQLAHDMRM (656 aa). The Sema domain occupies 35–503; the sequence is RLTISYEELS…AASGVLQFPL (469 aa). Residues N55, N111, and N126 are each glycosylated (N-linked (GlcNAc...) asparagine). A disulfide bond links C104 and C115. 3 disulfides stabilise this stretch: C133–C142, C268–C375, and C292–C335. N-linked (GlcNAc...) asparagine glycosylation is present at N386. Residues 505–556 form the PSI domain; that stretch reads SCSRYQSCYDCILARDPYCGWDSSIHACMVATTVANRTELIQDIERGNRGCE. 2 cysteine pairs are disulfide-bonded: C506/C523 and C515/C532. 2 N-linked (GlcNAc...) asparagine glycosylation sites follow: N540 and N596. In terms of domain architecture, Ig-like C2-type spans 565–647; it reads PPLKTRSVLR…RMLLASYSLT (83 aa). C582 and C630 form a disulfide bridge. A helical membrane pass occupies residues 674 to 694; sequence FYVVAIAILGGLCLILASSLL. The Cytoplasmic segment spans residues 695 to 837; sequence YVACLKGGRR…LVEQLDESSV (143 aa). The segment at 721–776 is disordered; the sequence is SAVQLQTVSGQCPGEEDEGDDGEGTGGLESGCLQIIPGEGAPAPPPPPPPPPPAEL. The segment covering 734–743 has biased composition (acidic residues); it reads GEEDEGDDGE. Pro residues predominate over residues 762–774; sequence PAPPPPPPPPPPA. A phosphoserine mark is found at S794 and S836.

This sequence belongs to the semaphorin family. As to quaternary structure, interacts with PLXNB2. Brain, spinal cord, and several sensory organs as well as specific populations of projection neurons.

The protein resides in the cell membrane. In terms of biological role, cell surface receptor for PLXNB2. May play a role in axon guidance. The sequence is that of Semaphorin-4G (Sema4g) from Mus musculus (Mouse).